Here is a 337-residue protein sequence, read N- to C-terminus: Inositol 2-dehydrogenase 1 (337 aa).

This sequence belongs to the Gfo/Idh/MocA family. As to quaternary structure, homotetramer.

The catalysed reaction is myo-inositol + NAD(+) = scyllo-inosose + NADH + H(+). Functionally, involved in the oxidation of myo-inositol (MI) to 2-keto-myo-inositol (2KMI or 2-inosose). This chain is Inositol 2-dehydrogenase 1, found in Paenarthrobacter aurescens (strain TC1).